Here is a 429-residue protein sequence, read N- to C-terminus: Enolase (429 aa).

Gln-163 lines the (2R)-2-phosphoglycerate pocket. Residue Glu-205 is the Proton donor of the active site. Mg(2+) contacts are provided by Asp-242, Glu-286, and Asp-313. The (2R)-2-phosphoglycerate site is built by Lys-338, Arg-367, Ser-368, and Lys-389. Residue Lys-338 is the Proton acceptor of the active site.

This sequence belongs to the enolase family. The cofactor is Mg(2+).

The protein localises to the cytoplasm. It localises to the secreted. It is found in the cell surface. It carries out the reaction (2R)-2-phosphoglycerate = phosphoenolpyruvate + H2O. It functions in the pathway carbohydrate degradation; glycolysis; pyruvate from D-glyceraldehyde 3-phosphate: step 4/5. Catalyzes the reversible conversion of 2-phosphoglycerate (2-PG) into phosphoenolpyruvate (PEP). It is essential for the degradation of carbohydrates via glycolysis. The polypeptide is Enolase (Geobacter metallireducens (strain ATCC 53774 / DSM 7210 / GS-15)).